A 307-amino-acid chain; its full sequence is Nucleotide-binding protein Arth_2083 (307 aa).

30–37 (GMSGAGRS) is an ATP binding site. 81 to 84 (DVRS) contributes to the GTP binding site.

It belongs to the RapZ-like family.

Displays ATPase and GTPase activities. The chain is Nucleotide-binding protein Arth_2083 from Arthrobacter sp. (strain FB24).